We begin with the raw amino-acid sequence, 764 residues long: 5-methyltetrahydropteroyltriglutamate--homocysteine methyltransferase (764 aa).

5-methyltetrahydropteroyltri-L-glutamate contacts are provided by residues 19–22 and Lys-113; that span reads RELK. Residues 435-437 and Glu-488 each bind L-homocysteine; that span reads IGS. Residues 435-437 and Glu-488 contribute to the L-methionine site; that span reads IGS. 5-methyltetrahydropteroyltri-L-glutamate is bound by residues 519–520 and Trp-565; that span reads RC. Asp-603 serves as a coordination point for L-homocysteine. Residue Asp-603 participates in L-methionine binding. Glu-609 serves as a coordination point for 5-methyltetrahydropteroyltri-L-glutamate. Residues His-645, Cys-647, and Glu-669 each contribute to the Zn(2+) site. The active-site Proton donor is the His-698. Residue Cys-730 coordinates Zn(2+).

Belongs to the vitamin-B12 independent methionine synthase family. Requires Zn(2+) as cofactor.

The catalysed reaction is 5-methyltetrahydropteroyltri-L-glutamate + L-homocysteine = tetrahydropteroyltri-L-glutamate + L-methionine. It functions in the pathway amino-acid biosynthesis; L-methionine biosynthesis via de novo pathway; L-methionine from L-homocysteine (MetE route): step 1/1. Catalyzes the transfer of a methyl group from 5-methyltetrahydrofolate to homocysteine resulting in methionine formation. In Desulforamulus reducens (strain ATCC BAA-1160 / DSM 100696 / MI-1) (Desulfotomaculum reducens), this protein is 5-methyltetrahydropteroyltriglutamate--homocysteine methyltransferase.